Reading from the N-terminus, the 258-residue chain is Small ribosomal subunit protein mS23 (258 aa).

Belongs to the mitochondrion-specific ribosomal protein mS23 family. As to quaternary structure, component of the mitochondrial small ribosomal subunit.

The protein resides in the mitochondrion. The protein is Small ribosomal subunit protein mS23 (rsm25) of Aspergillus fumigatus (strain ATCC MYA-4609 / CBS 101355 / FGSC A1100 / Af293) (Neosartorya fumigata).